We begin with the raw amino-acid sequence, 553 residues long: Arginine--tRNA ligase (553 aa).

Residues 123-133 (ANPTGPLTIGR) carry the 'HIGH' region motif.

Belongs to the class-I aminoacyl-tRNA synthetase family. In terms of assembly, monomer.

It is found in the cytoplasm. It carries out the reaction tRNA(Arg) + L-arginine + ATP = L-arginyl-tRNA(Arg) + AMP + diphosphate. This is Arginine--tRNA ligase from Chlorobium phaeobacteroides (strain BS1).